A 356-amino-acid chain; its full sequence is Histidinol-phosphate aminotransferase (356 aa).

Lysine 214 is subject to N6-(pyridoxal phosphate)lysine.

It belongs to the class-II pyridoxal-phosphate-dependent aminotransferase family. Histidinol-phosphate aminotransferase subfamily. Homodimer. Pyridoxal 5'-phosphate is required as a cofactor.

The enzyme catalyses L-histidinol phosphate + 2-oxoglutarate = 3-(imidazol-4-yl)-2-oxopropyl phosphate + L-glutamate. It participates in amino-acid biosynthesis; L-histidine biosynthesis; L-histidine from 5-phospho-alpha-D-ribose 1-diphosphate: step 7/9. This is Histidinol-phosphate aminotransferase from Escherichia coli (strain 55989 / EAEC).